The chain runs to 454 residues: Kynurenine--oxoglutarate transaminase 3 (454 aa).

F2 is modified (N-acetylserine). Residue G71 participates in substrate binding. N6-acetyllysine; alternate is present on K116. Residue K116 is modified to N6-succinyllysine; alternate. N218 serves as a coordination point for substrate. K280 carries the N6-(pyridoxal phosphate)lysine modification. Residue R429 participates in substrate binding.

The protein belongs to the class-I pyridoxal-phosphate-dependent aminotransferase family. As to quaternary structure, homodimer. It depends on pyridoxal 5'-phosphate as a cofactor.

The enzyme catalyses L-kynurenine + 2-oxoglutarate = kynurenate + L-glutamate + H2O. It carries out the reaction L-kynurenine + glyoxylate = kynurenate + glycine + H2O. The catalysed reaction is 3-hydroxy-L-kynurenine + glyoxylate = xanthurenate + glycine + H2O. It catalyses the reaction an S-substituted L-cysteine + H2O = a thiol + pyruvate + NH4(+). It participates in amino-acid degradation; L-kynurenine degradation; kynurenate from L-kynurenine: step 1/2. Its function is as follows. Catalyzes the irreversible transamination of the L-tryptophan metabolite L-kynurenine to form kynurenic acid (KA), an intermediate in the tryptophan catabolic pathway which is also a broad spectrum antagonist of the three ionotropic excitatory amino acid receptors among others. May catalyze the beta-elimination of S-conjugates and Se-conjugates of L-(seleno)cysteine, resulting in the cleavage of the C-S or C-Se bond. Has transaminase activity towards L-kynurenine, tryptophan, phenylalanine, serine, cysteine, methionine, histidine, glutamine and asparagine with glyoxylate as an amino group acceptor (in vitro). Has lower activity with 2-oxoglutarate as amino group acceptor (in vitro). The sequence is that of Kynurenine--oxoglutarate transaminase 3 from Homo sapiens (Human).